We begin with the raw amino-acid sequence, 939 residues long: Valine--tRNA ligase (939 aa).

The 'HIGH' region motif lies at 47-57; it reads PNVTGILHMGH. Positions 563-567 match the 'KMSKS' region motif; sequence KLSKS. Lys566 contributes to the ATP binding site. A coiled-coil region spans residues 874–939; the sequence is EHLAKERVRL…QSILDKLASL (66 aa).

The protein belongs to the class-I aminoacyl-tRNA synthetase family. ValS type 1 subfamily. As to quaternary structure, monomer.

It is found in the cytoplasm. It carries out the reaction tRNA(Val) + L-valine + ATP = L-valyl-tRNA(Val) + AMP + diphosphate. Functionally, catalyzes the attachment of valine to tRNA(Val). As ValRS can inadvertently accommodate and process structurally similar amino acids such as threonine, to avoid such errors, it has a 'posttransfer' editing activity that hydrolyzes mischarged Thr-tRNA(Val) in a tRNA-dependent manner. The chain is Valine--tRNA ligase from Chlamydia trachomatis serovar A (strain ATCC VR-571B / DSM 19440 / HAR-13).